The chain runs to 122 residues: Large ribosomal subunit protein uL22 (122 aa).

The segment at 102–122 (VAEGKEMKSSKSHKKNQAEGK) is disordered.

It belongs to the universal ribosomal protein uL22 family. Part of the 50S ribosomal subunit.

Functionally, this protein binds specifically to 23S rRNA; its binding is stimulated by other ribosomal proteins, e.g. L4, L17, and L20. It is important during the early stages of 50S assembly. It makes multiple contacts with different domains of the 23S rRNA in the assembled 50S subunit and ribosome. Its function is as follows. The globular domain of the protein is located near the polypeptide exit tunnel on the outside of the subunit, while an extended beta-hairpin is found that lines the wall of the exit tunnel in the center of the 70S ribosome. The polypeptide is Large ribosomal subunit protein uL22 (Helicobacter pylori (strain ATCC 700392 / 26695) (Campylobacter pylori)).